The primary structure comprises 399 residues: MSDSKEQRVQPLGLLEEDPTTSGIRLFPRDFQFQQTHGHKSSTGCLGHGPLVLQLLSFTLLAGFLVAILVQVYKGPSSLSQEQSEQDVIYQNLTQLKAAVGELSEKSKLQEIYQELTQLKAAVGELPEKSRLQEIYQELTRLKAAVGELPENSRLQEIYQELTQLKAAVGELPEKSKQQEIYQELTRLKAAVGELPEKSKQQEIYQELTRLKAAVGELPEKSKQQEIYQELTRLKAAVGELPDQSKQQQIYQELTDLKTAFERLCCRCPKDWTFFQGNCYFISNSQRNWHDSVTACQEVGAQLVVIKSAEEQNFLQLQSSRSNRFTWMGLSDLNQEGTWQWVDGSPLSSSFQRYWNSGEPNNSGDEDCAEFSGSGWNDNRCNVDNYWICKKPTACFRDE.

Residues 1–49 (MSDSKEQRVQPLGLLEEDPTTSGIRLFPRDFQFQQTHGHKSSTGCLGHG) are Cytoplasmic-facing. The short motif at 14–15 (LL) is the Endocytosis signal element. Residues 50–70 (PLVLQLLSFTLLAGFLVAILV) traverse the membrane as a helical; Signal-anchor for type II membrane protein segment. Topologically, residues 71 to 399 (QVYKGPSSLS…KKPTACFRDE (329 aa)) are extracellular. Asn-92 carries an N-linked (GlcNAc...) asparagine glycan. 7 tandem repeats follow at residues 108–130 (KLQEIYQELTQLKAAVGELPEKS), 131–153 (RLQEIYQELTRLKAAVGELPENS), 154–176 (RLQEIYQELTQLKAAVGELPEKS), 177–199 (KQQEIYQELTRLKAAVGELPEKS), 200–222 (KQQEIYQELTRLKAAVGELPEKS), 223–245 (KQQEIYQELTRLKAAVGELPDQS), and 246–268 (KQQQIYQELTDLKTAFERLCCRC). Residues 108 to 269 (KLQEIYQELT…AFERLCCRCP (162 aa)) are 7 X approximate tandem repeats. 4 disulfide bridges follow: Cys-265–Cys-395, Cys-268–Cys-279, Cys-296–Cys-389, and Cys-368–Cys-381. Positions 274 to 390 (FFQGNCYFIS…CNVDNYWICK (117 aa)) constitute a C-type lectin domain. Ca(2+) is bound by residues Glu-359, Asn-361, Ser-363, Glu-366, Asn-377, and Asp-378. Residue Asn-361 is glycosylated (N-linked (GlcNAc...) asparagine).

Homotetramer.

Its subcellular location is the membrane. Its function is as follows. Probable pathogen-recognition receptor involved in peripheral immune surveillance in liver. May mediate the endocytosis of pathogens which are subsequently degraded in lysosomal compartments. Probably recognizes in a calcium-dependent manner high mannose N-linked oligosaccharides in a variety of pathogen antigens. Is a receptor for ICAM3, probably by binding to mannose-like carbohydrates. The protein is C-type lectin domain family 4 member M (CLEC4M) of Nomascus concolor (Black crested gibbon).